Here is a 148-residue protein sequence, read N- to C-terminus: Large ribosomal subunit protein uL13 (148 aa).

This sequence belongs to the universal ribosomal protein uL13 family. Part of the 50S ribosomal subunit.

Functionally, this protein is one of the early assembly proteins of the 50S ribosomal subunit, although it is not seen to bind rRNA by itself. It is important during the early stages of 50S assembly. This is Large ribosomal subunit protein uL13 from Ureaplasma urealyticum serovar 10 (strain ATCC 33699 / Western).